A 1637-amino-acid chain; its full sequence is Kinesin-like protein KIF21B (1637 aa).

The Kinesin motor domain occupies 8-370 (CVKVAVRIRP…LKYANRARNI (363 aa)). 87-94 (GQTGAGKT) is an ATP binding site. Coiled coils occupy residues 376-604 (VNQD…EEEG) and 631-824 (NFQA…ALRR). An interaction with TRIM3 region spans residues 400 to 1099 (MEYKAGKRVI…LQALIYNVQQ (700 aa)). The segment covering 509–533 (ASARSPYSLGASPAAPAFGGSPASS) has biased composition (low complexity). 2 disordered regions span residues 509-538 (ASARSPYSLGASPAAPAFGGSPASSMEDAS) and 552-628 (KKKE…PEEK). Residues 578–627 (NSEETDENEAEEEEEERDESGCEEEEGREDEDEDSGSEESLVDSDSDPEE) show a composition bias toward acidic residues. A Phosphoserine modification is found at Ser-579. Thr-582 is subject to Phosphothreonine. 2 disordered regions span residues 830–865 (SERVAGRAGLKPPMLDSGAEVSASTTSSEAESGARS) and 880–906 (FLGDHPAPTVNGTRPARKKFQKKGASQ). The span at 846-865 (SGAEVSASTTSSEAESGARS) shows a compositional bias: low complexity. The stretch at 928 to 1016 (MQRMTIVNLE…EETKEELDST (89 aa)) forms a coiled coil. Ser-1149, Ser-1167, and Ser-1215 each carry phosphoserine. Over residues 1194 to 1217 (RTVSLPTRGSTFPRQSRATETSPL) the composition is skewed to polar residues. Residues 1194 to 1251 (RTVSLPTRGSTFPRQSRATETSPLTRRKSYDRGQPIRSTDVGFTPPSSPPTRPRNDRN) form a disordered region. The residue at position 1237 (Thr-1237) is a Phosphothreonine. Ser-1241 carries the post-translational modification Phosphoserine. 7 WD repeats span residues 1306–1343 (GHTKPILCLDATDELLFTGSKDRSCKMWNLVTGQEIAA), 1346–1384 (GHPNNVVSIKYCSHSGLVFSVSTSYIKVWDIRDSAKCIR), 1410–1448 (QGEHQINQIALSPSGTMLYAASGNAVRIWELSRFQPVGK), 1451–1493 (GHIG…TGTI), 1502–1539 (PHYDGIECLAIQGDILFSGSRDNGIKKWDLDQQELIQQ), 1543–1582 (AHKDWVCALAFIPGRPMLLSACRAGVIKVWNVDNFTPIGE), and 1585–1622 (GHDSPINAICTNAKHIFTASSDCRVKLWNYVPGLTPCL).

Belongs to the TRAFAC class myosin-kinesin ATPase superfamily. Kinesin family. Interacts with TRIM3; the interaction positively affects motility of KIF21B. Interacts with GABARAP and GABA(A) receptor subunits: GABRG2, GABRA1 and GABRA2. May interact with GABA(A) receptor subunits: GABRB2 and GABRB3.

Its subcellular location is the cytoplasm. The protein localises to the cytoskeleton. It localises to the cell projection. The protein resides in the dendrite. It is found in the growth cone. Its subcellular location is the axon. The protein localises to the cytoplasmic vesicle. Functionally, plus-end directed microtubule-dependent motor protein which displays processive activity. Is involved in regulation of microtubule dynamics, synapse function and neuronal morphology, including dendritic tree branching and spine formation. Plays a role in lerning and memory. Involved in delivery of gamma-aminobutyric acid (GABA(A)) receptor to cell surface. The sequence is that of Kinesin-like protein KIF21B (KIF21B) from Homo sapiens (Human).